Reading from the N-terminus, the 86-residue chain is Large ribosomal subunit protein bL27 (86 aa).

Belongs to the bacterial ribosomal protein bL27 family.

The polypeptide is Large ribosomal subunit protein bL27 (Xanthomonas oryzae pv. oryzae (strain PXO99A)).